A 340-amino-acid chain; its full sequence is Glycerol-3-phosphate dehydrogenase [NAD(P)+] (340 aa).

NADPH is bound by residues serine 13, tyrosine 14, and lysine 108. 3 residues coordinate sn-glycerol 3-phosphate: lysine 108, glycine 137, and threonine 139. An NADPH-binding site is contributed by alanine 141. The sn-glycerol 3-phosphate site is built by lysine 193, aspartate 246, serine 256, arginine 257, and asparagine 258. Lysine 193 (proton acceptor) is an active-site residue. An NADPH-binding site is contributed by arginine 257. NADPH is bound by residues isoleucine 281 and glutamate 283.

This sequence belongs to the NAD-dependent glycerol-3-phosphate dehydrogenase family.

It localises to the cytoplasm. The catalysed reaction is sn-glycerol 3-phosphate + NAD(+) = dihydroxyacetone phosphate + NADH + H(+). The enzyme catalyses sn-glycerol 3-phosphate + NADP(+) = dihydroxyacetone phosphate + NADPH + H(+). Its pathway is membrane lipid metabolism; glycerophospholipid metabolism. Its function is as follows. Catalyzes the reduction of the glycolytic intermediate dihydroxyacetone phosphate (DHAP) to sn-glycerol 3-phosphate (G3P), the key precursor for phospholipid synthesis. The polypeptide is Glycerol-3-phosphate dehydrogenase [NAD(P)+] (Bartonella quintana (strain Toulouse) (Rochalimaea quintana)).